Here is an 879-residue protein sequence, read N- to C-terminus: Alanine--tRNA ligase (879 aa).

Zn(2+)-binding residues include His566, His570, Cys668, and His672.

Belongs to the class-II aminoacyl-tRNA synthetase family. It depends on Zn(2+) as a cofactor.

The protein localises to the cytoplasm. It catalyses the reaction tRNA(Ala) + L-alanine + ATP = L-alanyl-tRNA(Ala) + AMP + diphosphate. Functionally, catalyzes the attachment of alanine to tRNA(Ala) in a two-step reaction: alanine is first activated by ATP to form Ala-AMP and then transferred to the acceptor end of tRNA(Ala). Also edits incorrectly charged Ser-tRNA(Ala) and Gly-tRNA(Ala) via its editing domain. This Clostridium botulinum (strain Alaska E43 / Type E3) protein is Alanine--tRNA ligase.